The primary structure comprises 244 residues: Transcriptional activator protein Anr (244 aa).

21–149 (APLCLPLSLN…RVMSREIRDD (129 aa)) provides a ligand contact to a nucleoside 3',5'-cyclic phosphate. An HTH crp-type domain is found at 159 to 232 (KTADERIATF…GKEVHILDPI (74 aa)). The H-T-H motif DNA-binding region spans 192-211 (RNEIGNYLGLAVETVSRVFT).

Functionally, transcriptional activator of anaerobic gene expression. Regulates the expression of the components of the hydrogen cyanide synthase (HcnABC) in a positive manner. May also act as an iron sensor. This chain is Transcriptional activator protein Anr, found in Pseudomonas protegens (strain DSM 19095 / LMG 27888 / CFBP 6595 / CHA0).